A 109-amino-acid chain; its full sequence is Mitochondrial import inner membrane translocase subunit TIM12 (109 aa).

At serine 2 the chain carries N-acetylserine. Positions 40–66 (CLEKCIPHEGFGEPDLTKGEQCCIDRC) match the Twin CX3C motif motif. Cystine bridges form between cysteine 40–cysteine 66 and cysteine 44–cysteine 62.

This sequence belongs to the small Tim family. As to quaternary structure, component of the TIM22 complex, whose core is composed of TIM18, TIM22 and TIM54, associated with the peripheral proteins MRS5/TIM12 and the 70 kDa heterohexamer composed of TIM9 and TIM10 (or TIM8 and TIM13). Interacts directly with both the TIM22 protein and the TIM9-TIM10 heterohexamer. Interacts with multi-pass transmembrane proteins in transit.

The protein localises to the mitochondrion inner membrane. It is found in the mitochondrion intermembrane space. Functionally, essential component of the TIM22 complex, a complex that mediates the import and insertion of multi-pass transmembrane proteins into the mitochondrial inner membrane. The TIM22 complex forms a twin-pore translocase that uses the membrane potential as external driving force. In the TIM22 complex, it acts as a docking point for the soluble TIM9-TIM10 heterohexamer that guides the target proteins in transit through the aqueous mitochondrial intermembrane space. The chain is Mitochondrial import inner membrane translocase subunit TIM12 (TIM12) from Saccharomyces cerevisiae (strain ATCC 204508 / S288c) (Baker's yeast).